A 300-amino-acid chain; its full sequence is 4-hydroxy-tetrahydrodipicolinate synthase (300 aa).

Pyruvate is bound at residue T49. Residue Y137 is the Proton donor/acceptor of the active site. K166 serves as the catalytic Schiff-base intermediate with substrate. I208 is a pyruvate binding site.

The protein belongs to the DapA family. As to quaternary structure, homotetramer; dimer of dimers.

The protein localises to the cytoplasm. It carries out the reaction L-aspartate 4-semialdehyde + pyruvate = (2S,4S)-4-hydroxy-2,3,4,5-tetrahydrodipicolinate + H2O + H(+). It functions in the pathway amino-acid biosynthesis; L-lysine biosynthesis via DAP pathway; (S)-tetrahydrodipicolinate from L-aspartate: step 3/4. Catalyzes the condensation of (S)-aspartate-beta-semialdehyde [(S)-ASA] and pyruvate to 4-hydroxy-tetrahydrodipicolinate (HTPA). The chain is 4-hydroxy-tetrahydrodipicolinate synthase from Methanopyrus kandleri (strain AV19 / DSM 6324 / JCM 9639 / NBRC 100938).